The primary structure comprises 293 residues: NAD kinase (293 aa).

Residue Asp73 is the Proton acceptor of the active site. NAD(+) is bound by residues 73–74 (DG), His78, 147–148 (ND), Arg158, Arg175, Asp177, 188–193 (TAYALS), and Gln248.

It belongs to the NAD kinase family. The cofactor is a divalent metal cation.

The protein resides in the cytoplasm. It carries out the reaction NAD(+) + ATP = ADP + NADP(+) + H(+). In terms of biological role, involved in the regulation of the intracellular balance of NAD and NADP, and is a key enzyme in the biosynthesis of NADP. Catalyzes specifically the phosphorylation on 2'-hydroxyl of the adenosine moiety of NAD to yield NADP. In Nitrosococcus oceani (strain ATCC 19707 / BCRC 17464 / JCM 30415 / NCIMB 11848 / C-107), this protein is NAD kinase.